Here is a 93-residue protein sequence, read N- to C-terminus: MRLVANTKSAKKRILIIRKRTMRNKAIRSAVKTAIKKFEMALKVKPAEEARELLRQAVRALDKAVTKGVIHKNTASRKKSRLTRKFNSVYKAS.

Residues 72-93 (KNTASRKKSRLTRKFNSVYKAS) form a disordered region. A compositionally biased stretch (basic residues) spans 74-84 (TASRKKSRLTR).

The protein belongs to the bacterial ribosomal protein bS20 family.

Functionally, binds directly to 16S ribosomal RNA. This chain is Small ribosomal subunit protein bS20, found in Carboxydothermus hydrogenoformans (strain ATCC BAA-161 / DSM 6008 / Z-2901).